A 117-amino-acid chain; its full sequence is MTRVKSGKISKNRHKKILKLAKGYRGRANSCFRVAIEKVEKALQYAYRDRRNRKRDFRGLWIQRINAAVREHELVYSQFMGALKKAGIDINRKVLAELAVNNSDGFVSIVEKAKAHI.

It belongs to the bacterial ribosomal protein bL20 family.

Binds directly to 23S ribosomal RNA and is necessary for the in vitro assembly process of the 50S ribosomal subunit. It is not involved in the protein synthesizing functions of that subunit. This chain is Large ribosomal subunit protein bL20, found in Rickettsia massiliae (strain Mtu5).